The following is a 282-amino-acid chain: Bacterial lipoprotein FTN_1103 (282 aa).

A signal peptide spans 1–28 (MKYGNLMMTKKKLLIGMVTISGIVILGS). A lipid anchor (N-palmitoyl cysteine) is attached at Cys29. Cys29 carries S-diacylglycerol cysteine lipidation.

Its subcellular location is the cell membrane. Its function is as follows. Stimulates the host immune inflammatory signaling system allowing the host to combat the bacteria. Stimulates mouse interleukin-6 (Il6) production. The sequence is that of Bacterial lipoprotein FTN_1103 from Francisella tularensis subsp. novicida (strain U112).